Reading from the N-terminus, the 70-residue chain is Small ribosomal subunit protein bS21B (70 aa).

This sequence belongs to the bacterial ribosomal protein bS21 family.

This Cupriavidus metallidurans (strain ATCC 43123 / DSM 2839 / NBRC 102507 / CH34) (Ralstonia metallidurans) protein is Small ribosomal subunit protein bS21B.